Consider the following 611-residue polypeptide: Guanylate-binding protein 6 (611 aa).

Residues 1 to 308 (MTQPQMAPIC…NAINSGAVPC (308 aa)) form a GTPase domain (Globular) region. The region spanning 33 to 275 (SQPVVVVAIV…FVSYIFTYAK (243 aa)) is the GB1/RHD3-type G domain. Residues 43 to 50 (GLYRTGKS), 65 to 67 (LGS), and 95 to 99 (DTEGL) each bind GTP.

This sequence belongs to the TRAFAC class dynamin-like GTPase superfamily. GB1/RHD3 GTPase family. GB1 subfamily.

Its subcellular location is the cytoplasmic vesicle. It carries out the reaction GTP + H2O = GDP + phosphate + H(+). Functionally, interferon (IFN)-inducible GTPase that plays important roles in innate immunity against a diverse range of bacterial, viral and protozoan pathogens, such as bacterial pathogens Listeria monocytogenes and Mycobacterium bovis BCG as well as the protozoan pathogen Toxoplasma gondii. Confers protection to several pathogens, including the bacterial pathogens Listeria monocytogenes and Mycobacterium bovis BCG as well as the protozoan pathogen Toxoplasma gondii. This Mus musculus (Mouse) protein is Guanylate-binding protein 6 (Gbp6).